Reading from the N-terminus, the 427-residue chain is Enolase (427 aa).

Q162 serves as a coordination point for (2R)-2-phosphoglycerate. E204 acts as the Proton donor in catalysis. Residues D241, E282, and D309 each coordinate Mg(2+). Residues K334, R363, S364, and K385 each contribute to the (2R)-2-phosphoglycerate site. Catalysis depends on K334, which acts as the Proton acceptor.

It belongs to the enolase family. Requires Mg(2+) as cofactor.

It is found in the cytoplasm. The protein localises to the secreted. Its subcellular location is the cell surface. It carries out the reaction (2R)-2-phosphoglycerate = phosphoenolpyruvate + H2O. The protein operates within carbohydrate degradation; glycolysis; pyruvate from D-glyceraldehyde 3-phosphate: step 4/5. Catalyzes the reversible conversion of 2-phosphoglycerate (2-PG) into phosphoenolpyruvate (PEP). It is essential for the degradation of carbohydrates via glycolysis. This chain is Enolase, found in Frankia casuarinae (strain DSM 45818 / CECT 9043 / HFP020203 / CcI3).